We begin with the raw amino-acid sequence, 186 residues long: LSM12 homolog B (186 aa).

The Sm domain maps to 1 to 74 (MSSLAPCFTV…CMDIEIVKEA (74 aa)). An AD domain is found at 84–186 (EPIDLPMIRE…VVQNFCSKQF (103 aa)).

It belongs to the LSM12 family. As to quaternary structure, interacts with Sbat; along with Sbat and Vlet, may form an accessory subcomplex involved in SMN complex function.

May have an accessory function in the survival motor neuron (SMN) complex. The protein is LSM12 homolog B of Drosophila melanogaster (Fruit fly).